Here is a 312-residue protein sequence, read N- to C-terminus: Terpene synthase 8 (312 aa).

The DDxx(x)D/E motif motif lies at 96–101 (DDYIYE). The NDxxSxxxD/E motif motif lies at 224-232 (NDCGSFKME).

This sequence belongs to the terpene synthase family.

It catalyses the reaction (2E,6E)-farnesyl diphosphate + H2O = discoidol + diphosphate. Its pathway is sesquiterpene biosynthesis. Its function is as follows. Terpene synthase; part of the gene cluster that mediates the biosynthesis of the trisnorsesquiterpene discodiene which has a function during later stages of multicellular development, during the transition from fingers to Mexican hats. The terpene synthase tps8 converts its substrate farnesyl diphosphate (FDP) into the bicyclic sesquiterpene alcohol discoidol. The cytochrome P450 monooxygenase cyp521A1 then catalyzes the oxidative degradation of discoidol to form the trisnorsesquiterpene discodiene. This chain is Terpene synthase 8, found in Dictyostelium discoideum (Social amoeba).